The chain runs to 192 residues: Holliday junction branch migration complex subunit RuvA (192 aa).

The tract at residues methionine 1–leucine 64 is domain I. Residues threonine 65–alanine 143 are domain II. The segment at valine 144–glutamine 149 is flexible linker. Residues glutamine 149–valine 192 are domain III.

The protein belongs to the RuvA family. As to quaternary structure, homotetramer. Forms an RuvA(8)-RuvB(12)-Holliday junction (HJ) complex. HJ DNA is sandwiched between 2 RuvA tetramers; dsDNA enters through RuvA and exits via RuvB. An RuvB hexamer assembles on each DNA strand where it exits the tetramer. Each RuvB hexamer is contacted by two RuvA subunits (via domain III) on 2 adjacent RuvB subunits; this complex drives branch migration. In the full resolvosome a probable DNA-RuvA(4)-RuvB(12)-RuvC(2) complex forms which resolves the HJ.

Its subcellular location is the cytoplasm. Its function is as follows. The RuvA-RuvB-RuvC complex processes Holliday junction (HJ) DNA during genetic recombination and DNA repair, while the RuvA-RuvB complex plays an important role in the rescue of blocked DNA replication forks via replication fork reversal (RFR). RuvA specifically binds to HJ cruciform DNA, conferring on it an open structure. The RuvB hexamer acts as an ATP-dependent pump, pulling dsDNA into and through the RuvAB complex. HJ branch migration allows RuvC to scan DNA until it finds its consensus sequence, where it cleaves and resolves the cruciform DNA. The chain is Holliday junction branch migration complex subunit RuvA from Dechloromonas aromatica (strain RCB).